The primary structure comprises 177 residues: Large ribosomal subunit protein uL6 (177 aa).

It belongs to the universal ribosomal protein uL6 family. As to quaternary structure, part of the 50S ribosomal subunit.

Its function is as follows. This protein binds to the 23S rRNA, and is important in its secondary structure. It is located near the subunit interface in the base of the L7/L12 stalk, and near the tRNA binding site of the peptidyltransferase center. This chain is Large ribosomal subunit protein uL6, found in Aliivibrio salmonicida (strain LFI1238) (Vibrio salmonicida (strain LFI1238)).